Here is a 198-residue protein sequence, read N- to C-terminus: Protein UNCMA_24250 (198 aa).

An AMMECR1 domain is found at 5–194 (EDGTLAVKTA…ETEPGGPVIE (190 aa)).

The sequence is that of Protein UNCMA_24250 from Methanocella arvoryzae (strain DSM 22066 / NBRC 105507 / MRE50).